The primary structure comprises 339 residues: Inositol 2-dehydrogenase (339 aa).

It belongs to the Gfo/Idh/MocA family. Homotetramer.

It carries out the reaction myo-inositol + NAD(+) = scyllo-inosose + NADH + H(+). In terms of biological role, involved in the oxidation of myo-inositol (MI) to 2-keto-myo-inositol (2KMI or 2-inosose). This Leifsonia xyli subsp. xyli (strain CTCB07) protein is Inositol 2-dehydrogenase.